Reading from the N-terminus, the 122-residue chain is Large ribosomal subunit protein uL14 (122 aa).

It belongs to the universal ribosomal protein uL14 family. As to quaternary structure, part of the 50S ribosomal subunit. Forms a cluster with proteins L3 and L19. In the 70S ribosome, L14 and L19 interact and together make contacts with the 16S rRNA in bridges B5 and B8.

Its function is as follows. Binds to 23S rRNA. Forms part of two intersubunit bridges in the 70S ribosome. This Shewanella halifaxensis (strain HAW-EB4) protein is Large ribosomal subunit protein uL14.